A 486-amino-acid polypeptide reads, in one-letter code: Probable transporter MCH1 (486 aa).

The Cytoplasmic segment spans residues 1 to 29; the sequence is MPLSKVEHYLSYHTRLLLPHVLSLQSSHR. A helical membrane pass occupies residues 30–50; sequence VAYIFSLLSAVSTGFITLISL. Over 51 to 67 the chain is Vacuolar; sequence YSQPWQKHLNYSSWQIN. A glycan (N-linked (GlcNAc...) asparagine) is linked at N60. The chain crosses the membrane as a helical span at residues 68 to 88; sequence TIASMTNLGMYLTPPILGMIA. The Cytoplasmic portion of the chain corresponds to 89 to 93; it reads DSHGP. A helical transmembrane segment spans residues 94 to 114; sequence ITLSLLAIIGFIPSYSYLAYV. Over 115 to 133 the chain is Vacuolar; the sequence is FNHPELSLGGNGDSSFNLS. N131 is a glycosylation site (N-linked (GlcNAc...) asparagine). Residues 134-154 form a helical membrane-spanning segment; it reads IICFVFIGISTSALYFSALLT. Residues 155-163 lie on the Cytoplasmic side of the membrane; the sequence is CTKLYPHTK. Residues 164–184 traverse the membrane as a helical segment; that stretch reads LLSISLPTTCYGISSVVGSQL. Residues 185–212 lie on the Vacuolar side of the membrane; that stretch reads LRIKWFWSSNASSSSSNSDLNLGRVFQT. N-linked (GlcNAc...) asparagine glycosylation is present at N194. Residues 213-233 form a helical membrane-spanning segment; that stretch reads FALVYVVIGLLAWIATSVVSL. The Cytoplasmic portion of the chain corresponds to 234–279; it reads LHFNEEQDNQKRLDDQTDVEQSPLLERSNHVQEKFTQTMLRIFSDP. S255 is subject to Phosphoserine. The chain crosses the membrane as a helical span at residues 280-300; it reads VTYILAVSILLSLGPLEMFIA. At 301–320 the chain is on the vacuolar side; that stretch reads NMGSLTNLLVQLDAPTLSTK. The helical transmembrane segment at 321–343 threads the bilayer; it reads LLSTYALSSTFTRLLTGIVADFF. The Cytoplasmic portion of the chain corresponds to 344-347; the sequence is AKKK. A helical transmembrane segment spans residues 348–368; that stretch reads ISIKWILLTFLSLGVCAQLFL. The Vacuolar portion of the chain corresponds to 369–385; it reads LKMTSSASPWGLVPTGS. The helical transmembrane segment at 386–406 threads the bilayer; the sequence is LVGIVYGGLFTVYPTLVLLVW. Over 407-413 the chain is Cytoplasmic; it reads GERSFGT. The helical transmembrane segment at 414–434 threads the bilayer; it reads VYGSLLIAPAIGSMIFCMLYA. At 435-456 the chain is on the vacuolar side; the sequence is KFYDSRCMSGGGDLRNPSCISA. A helical transmembrane segment spans residues 457–477; that stretch reads VYKYSSIAFVVSAVLSAVVFW. At 478-486 the chain is on the cytoplasmic side; that stretch reads KLKSRKLRI.

This sequence belongs to the major facilitator superfamily.

The protein localises to the vacuole membrane. Probable transporter. Does not act in the transport of monocarboxylic acids across the plasma membrane. The protein is Probable transporter MCH1 (MCH1) of Saccharomyces cerevisiae (strain ATCC 204508 / S288c) (Baker's yeast).